Consider the following 460-residue polypeptide: Cysteine--tRNA ligase (460 aa).

C27 contributes to the Zn(2+) binding site. The 'HIGH' region signature appears at 29–39 (PTVYDLIHVGN). Zn(2+) contacts are provided by C207, H232, and E236. A 'KMSKS' region motif is present at residues 264-268 (KMSKS). K267 is an ATP binding site.

The protein belongs to the class-I aminoacyl-tRNA synthetase family. Monomer. Zn(2+) is required as a cofactor.

It localises to the cytoplasm. It carries out the reaction tRNA(Cys) + L-cysteine + ATP = L-cysteinyl-tRNA(Cys) + AMP + diphosphate. The protein is Cysteine--tRNA ligase of Thermotoga petrophila (strain ATCC BAA-488 / DSM 13995 / JCM 10881 / RKU-1).